The following is a 105-amino-acid chain: DNA-directed RNA polymerase subunit omega (105 aa).

Belongs to the RNA polymerase subunit omega family. In terms of assembly, the RNAP catalytic core consists of 2 alpha, 1 beta, 1 beta' and 1 omega subunit. When a sigma factor is associated with the core the holoenzyme is formed, which can initiate transcription.

The catalysed reaction is RNA(n) + a ribonucleoside 5'-triphosphate = RNA(n+1) + diphosphate. In terms of biological role, promotes RNA polymerase assembly. Latches the N- and C-terminal regions of the beta' subunit thereby facilitating its interaction with the beta and alpha subunits. The polypeptide is DNA-directed RNA polymerase subunit omega (Streptococcus equi subsp. zooepidemicus (strain MGCS10565)).